We begin with the raw amino-acid sequence, 946 residues long: Protein RRC1 (946 aa).

Disordered regions lie at residues 1–29 (MSSF…KAED) and 41–183 (SFQG…NLYV). 3 stretches are compositionally biased toward basic and acidic residues: residues 15–29 (KHRE…KAED), 62–75 (DKPK…KSKD), and 98–147 (KGKE…DRQG). Residues 179 to 260 (TNLYVGNLSP…YELKIGWGKA (82 aa)) form the RRM domain. An SURP motif repeat occupies 329-372 (VIDTLALYVLDGECAFEQAIMERGRGNPLFKFMFELGSKEHTYY). The 146-residue stretch at 437–582 (LTDPQRDEFE…GLRSTFLRSG (146 aa)) folds into the CID domain. In terms of domain architecture, SAP spans 631-665 (LMNLPIAELERRCRHNGLSLVGGRVMMVTRLLSLE). Disordered stretches follow at residues 740–797 (ASKW…EQRQ) and 836–946 (EVDY…RGTR). Positions 757 to 767 (SSSSGSDNTGG) are enriched in polar residues. 3 stretches are compositionally biased toward basic and acidic residues: residues 772–781 (ADGEDLKGND), 854–868 (IIER…QESS), and 886–946 (STRE…RGTR).

As to quaternary structure, component of the SWAP1-SFPS-RRC1 splicing factor complex which modulates pre-mRNA splicing to promote photomorphogenesis. Interacts with SWAP1 in a light-independent manner. As to expression, expressed in leaves, inflorescence stems, roots, flower buds, open flowers and siliques.

It is found in the nucleus speckle. In terms of biological role, as a member of the SWAP1-SFPS-RRC1 splicing factor complex, modulates photomorphogenesis by regulating the gene expression and pre-messenger RNA (mRNA) alternative splicing of a large number of genes, including those involved in plant responses to light signaling. SR-like splicing factor required for phytochrome B (phyB) signal transduction and involved in phyB-dependent alternative splicing. This Arabidopsis thaliana (Mouse-ear cress) protein is Protein RRC1.